A 425-amino-acid polypeptide reads, in one-letter code: Enolase (425 aa).

Residue Gln163 participates in (2R)-2-phosphoglycerate binding. Glu205 serves as the catalytic Proton donor. Asp242, Glu285, and Asp312 together coordinate Mg(2+). Residues Lys337, Arg366, Ser367, and Lys388 each contribute to the (2R)-2-phosphoglycerate site. Lys337 serves as the catalytic Proton acceptor.

It belongs to the enolase family. Mg(2+) is required as a cofactor.

The protein localises to the cytoplasm. It is found in the secreted. The protein resides in the cell surface. It catalyses the reaction (2R)-2-phosphoglycerate = phosphoenolpyruvate + H2O. Its pathway is carbohydrate degradation; glycolysis; pyruvate from D-glyceraldehyde 3-phosphate: step 4/5. In terms of biological role, catalyzes the reversible conversion of 2-phosphoglycerate (2-PG) into phosphoenolpyruvate (PEP). It is essential for the degradation of carbohydrates via glycolysis. This Jannaschia sp. (strain CCS1) protein is Enolase.